The primary structure comprises 603 residues: Elongation factor 4 (603 aa).

The 183-residue stretch at 6–188 (AHIRNFCIIA…SVVQNVPPPS (183 aa)) folds into the tr-type G domain. Residues 18–23 (DHGKST) and 135–138 (NKID) each bind GTP.

The protein belongs to the TRAFAC class translation factor GTPase superfamily. Classic translation factor GTPase family. LepA subfamily.

Its subcellular location is the cell inner membrane. The catalysed reaction is GTP + H2O = GDP + phosphate + H(+). Functionally, required for accurate and efficient protein synthesis under certain stress conditions. May act as a fidelity factor of the translation reaction, by catalyzing a one-codon backward translocation of tRNAs on improperly translocated ribosomes. Back-translocation proceeds from a post-translocation (POST) complex to a pre-translocation (PRE) complex, thus giving elongation factor G a second chance to translocate the tRNAs correctly. Binds to ribosomes in a GTP-dependent manner. This chain is Elongation factor 4, found in Myxococcus xanthus (strain DK1622).